Consider the following 154-residue polypeptide: Ecotin-like protein 2 (154 aa).

This sequence belongs to the protease inhibitor I11 (ecotin) family.

The protein is Ecotin-like protein 2 of Leishmania braziliensis.